We begin with the raw amino-acid sequence, 83 residues long: Small ribosomal subunit protein bS18 (83 aa).

Residues 1–23 form a disordered region; that stretch reads MKQRNNAKRVRLEQTRRPKKNPL.

This sequence belongs to the bacterial ribosomal protein bS18 family. In terms of assembly, part of the 30S ribosomal subunit. Forms a tight heterodimer with protein bS6.

Binds as a heterodimer with protein bS6 to the central domain of the 16S rRNA, where it helps stabilize the platform of the 30S subunit. The polypeptide is Small ribosomal subunit protein bS18 (Corynebacterium efficiens (strain DSM 44549 / YS-314 / AJ 12310 / JCM 11189 / NBRC 100395)).